Consider the following 297-residue polypeptide: uncharacterized protein (297 aa).

WD repeat units follow at residues 12-51 (KAKEPINVVKYNRTGKYVLAAGNERVVRLWNVKSGACIHE), 54-93 (GHGHEILDLDLVYDSTKFASCGGDKFIQVWDVNTGKVDRR), 96-135 (GHLAQINTIRYNEDSSILASGSFDSKVRLWDCRSNSFSPI), 140-177 (DAKDSVSSIDIAEHLIVTGSTDGTLRTYDIRKGTLSSD), 179-217 (FSHPITSVKTSKSASFSLISSLNSSIHLLDQETGKILKS), 222-261 (KNMEYRVRSSFNQSETIVFSGSEDGKVYLWDLENETQITS), and 265-297 (VGTPIVTDISCHPTMDDFIIATVHGDLFIYQYN).

This sequence belongs to the WD repeat MORG1 family.

The protein localises to the cytoplasm. Its subcellular location is the nucleus. This is an uncharacterized protein from Schizosaccharomyces pombe (strain 972 / ATCC 24843) (Fission yeast).